Consider the following 91-residue polypeptide: MTNAKMTFAVQFSERYINKYIGSPIDDLMVSMAGTTQSYQMRLKRSKDSRAMLTTGWNQLIDAKAFDEGDVCLFHFKEVDDVLVLKVHVLK.

The TF-B3 DNA-binding region spans 1–91 (MTNAKMTFAV…VLVLKVHVLK (91 aa)).

Its subcellular location is the nucleus. The sequence is that of B3 domain-containing protein Os03g0164300 from Oryza sativa subsp. japonica (Rice).